The following is a 690-amino-acid chain: MSKIPQHYPGKKRSAPRHVFIQQAKKKKQTNPAVYHGEDTIEEMDSTEAEQMDTEQATNQTAEAGGGGGGGGGGGGGGGGVGNSTGGFNNTTEFKVINNEVYITCHATRMVHINQADTDEYLIFNAGRTTDTKTHQQKLNLEFFVYDDFHQQVMTPWYIVDSNAWGVWMSPKDFQQMKTLCSEISLVTLEQEIDNVTIKTVTETNQGNASTKQFNNDLTASLQVALDTNNILPYTPAAPLGETLGFVPWRATKPTQYRYYHPCYIYNRYPNIQKVATETLTWDAVQDDYLSVDEQYFNFITIENNIPINILRTGDNFHTGLYEFNSKPCKLTLSYQSTRCLGLPPLCKPKTDTTHKVTSKENGADLIYIQGQDNTRLGHFWGEERGKKNAEMNRIRPYNIGYQYPEWIIPAGLQGSYFAGGPRQWSDTTKGAGTHSQHLQQNFSTRYIYDRNHGGDNEVDLLDGIPIHERSNYYSDNEIEQHTAKQPKLRTPPIHHSKIDSWEEEGWPAASGTHFEDEVIYLDYFNFSGEQELNFPHEVLDDAAQMKKLLNSYQPTVAQDNVGPVYPWGQIWDKKPHMDHKPSMNNNAPFVCKNNPPGQLFVKLTENLTDTFNYDENPDRIKTYGYFTWRGKLVLKGKLSQVTCWNPVKRELIGEPGVFTKDKYHKQIPNNKGNFEIGLQYGRSTIKYIY.

The disordered stretch occupies residues 1-80 (MSKIPQHYPG…GGGGGGGGGG (80 aa)). Residues 40 to 53 (TIEEMDSTEAEQMD) show a composition bias toward acidic residues. Gly residues predominate over residues 64 to 80 (AGGGGGGGGGGGGGGGG).

The protein belongs to the parvoviridae capsid protein family.

The protein localises to the virion. The protein resides in the host nucleus. In terms of biological role, capsid protein self-assembles to form an icosahedral capsid with a T=1 symmetry, about 25 nm in diameter, and consisting of 60 copies of two size variants of the capsid proteins, VP1 (10% abundance) and VP2 (90% abundance), which differ by the presence of an N-terminal extension in the minor protein VP1. Capsid proteins are responsible for the attachment to host cell receptors. This attachment induces virion internalization predominantly through clathrin-dependent endocytosis. VP1 binds DNA and may therefore play a role in viral DNA encapsidation. The chain is Capsid protein VP1 from Aleutian mink disease parvovirus (strain G) (ADV).